The chain runs to 155 residues: Large ribosomal subunit protein uL11 (155 aa).

It belongs to the universal ribosomal protein uL11 family. In terms of assembly, part of the ribosomal stalk of the 50S ribosomal subunit. Interacts with L10 and the large rRNA to form the base of the stalk. L10 forms an elongated spine to which L12 dimers bind in a sequential fashion forming a multimeric L10(L12)X complex. One or more lysine residues are methylated.

Functionally, forms part of the ribosomal stalk which helps the ribosome interact with GTP-bound translation factors. In Malacoplasma penetrans (strain HF-2) (Mycoplasma penetrans), this protein is Large ribosomal subunit protein uL11.